The primary structure comprises 350 residues: tRNA uridine(34) hydroxylase (350 aa).

In terms of domain architecture, Rhodanese spans 146–240 (DDPDAVFIDM…YARRAREQGL (95 aa)). Cysteine 200 (cysteine persulfide intermediate) is an active-site residue. Residues 319 to 328 (RRRRAGRENG) are compositionally biased toward basic and acidic residues. Positions 319 to 350 (RRRRAGRENGNKIFNKSRGRLNSKLSIPDPAE) are disordered.

This sequence belongs to the TrhO family.

The enzyme catalyses uridine(34) in tRNA + AH2 + O2 = 5-hydroxyuridine(34) in tRNA + A + H2O. Functionally, catalyzes oxygen-dependent 5-hydroxyuridine (ho5U) modification at position 34 in tRNAs. The chain is tRNA uridine(34) hydroxylase from Salmonella typhi.